The sequence spans 380 residues: MKKIYFIAGEMSGDFIGGHIIQNLKSNEGLEFTGIGGQYMEEAGNFKSLFTITAINFIGFIEIIPHLLKIKKLIDKTVENIINSKVDLLITIDSPGFTYRVAKRVRKFLPNLKIIHIVAPSVWAYKAGRAVDYAKIYDCLFALLPFEPPYFTKVGLDCRYIGHPILEQEFYRDKIALRKEFKIDDNESILCVTFGTRKGEILRHLPIFITAIQKISKDYKNLRIIFPLVHPDHEAIIKPFLENVQFNYLFLSSERLKAYAVSDLALAKSGTNTLEISASGTPMVVAYKVNIISFFIIMFLIKIKYVSLINIMAGSAIIPEFIQFNCRANLISNKLKELLSNSQKRDNQVVESQKILQKLRFASDRSPSYIAAKIIKQEFL.

The protein belongs to the LpxB family.

It carries out the reaction a lipid X + a UDP-2-N,3-O-bis[(3R)-3-hydroxyacyl]-alpha-D-glucosamine = a lipid A disaccharide + UDP + H(+). It participates in bacterial outer membrane biogenesis; LPS lipid A biosynthesis. Functionally, condensation of UDP-2,3-diacylglucosamine and 2,3-diacylglucosamine-1-phosphate to form lipid A disaccharide, a precursor of lipid A, a phosphorylated glycolipid that anchors the lipopolysaccharide to the outer membrane of the cell. The sequence is that of Lipid-A-disaccharide synthase from Rickettsia typhi (strain ATCC VR-144 / Wilmington).